Reading from the N-terminus, the 479-residue chain is tRNA modification GTPase MnmE (479 aa).

(6S)-5-formyl-5,6,7,8-tetrahydrofolate-binding residues include arginine 25, glutamate 82, and lysine 134. Residues 230–401 (GLRVVIAGQP…LRAALLARAG (172 aa)) form the TrmE-type G domain. Asparagine 240 provides a ligand contact to K(+). GTP is bound by residues 240–245 (NAGKSS), 259–265 (TPIPGTT), 284–287 (DTAG), 352–355 (NKAD), and 382–384 (SAR). Serine 244 serves as a coordination point for Mg(2+). The K(+) site is built by threonine 259, isoleucine 261, and threonine 264. Threonine 265 contributes to the Mg(2+) binding site. (6S)-5-formyl-5,6,7,8-tetrahydrofolate is bound at residue lysine 479.

Belongs to the TRAFAC class TrmE-Era-EngA-EngB-Septin-like GTPase superfamily. TrmE GTPase family. As to quaternary structure, homodimer. Heterotetramer of two MnmE and two MnmG subunits. The cofactor is K(+).

It localises to the cytoplasm. Functionally, exhibits a very high intrinsic GTPase hydrolysis rate. Involved in the addition of a carboxymethylaminomethyl (cmnm) group at the wobble position (U34) of certain tRNAs, forming tRNA-cmnm(5)s(2)U34. This chain is tRNA modification GTPase MnmE, found in Leptothrix cholodnii (strain ATCC 51168 / LMG 8142 / SP-6) (Leptothrix discophora (strain SP-6)).